The chain runs to 169 residues: Putative 3-methyladenine DNA glycosylase (169 aa).

The protein belongs to the DNA glycosylase MPG family.

The chain is Putative 3-methyladenine DNA glycosylase from Wolbachia sp. subsp. Brugia malayi (strain TRS).